A 261-amino-acid polypeptide reads, in one-letter code: Vacuolar iron transporter (261 aa).

A helical transmembrane segment spans residues 66–86 (GQVLIAALAALFAGALSMAVG). 5 residues coordinate Fe cation: E105, E108, E116, E119, and E154. 3 consecutive transmembrane segments (helical) span residues 170–190 (MVSF…GAWI), 197–217 (IGAI…VGAF), and 233–253 (GGAL…TLNI).

The protein belongs to the CCC1 family.

The protein localises to the vacuole membrane. It carries out the reaction Fe(2+)(in) = Fe(2+)(out). Its function is as follows. Vacuolar iron transporter involved in the transfer of iron ions from the cytosol to the vacuole for intracellular iron storage. This chain is Vacuolar iron transporter, found in Acanthamoeba castellanii (strain ATCC 30010 / Neff).